The sequence spans 459 residues: Ribulose bisphosphate carboxylase large chain (459 aa).

K4 is subject to N6,N6,N6-trimethyllysine. Substrate-binding residues include N113 and T163. K165 serves as the catalytic Proton acceptor. K167 is a substrate binding site. Mg(2+)-binding residues include K191, D193, and E194. Position 191 is an N6-carboxylysine (K191). H284 (proton acceptor) is an active-site residue. Residues R285, H317, and S369 each coordinate substrate.

Belongs to the RuBisCO large chain family. Type I subfamily. In terms of assembly, heterohexadecamer of 8 large chains and 8 small chains; disulfide-linked. The disulfide link is formed within the large subunit homodimers. The cofactor is Mg(2+). The disulfide bond which can form in the large chain dimeric partners within the hexadecamer appears to be associated with oxidative stress and protein turnover.

It localises to the plastid. Its subcellular location is the chloroplast. The enzyme catalyses 2 (2R)-3-phosphoglycerate + 2 H(+) = D-ribulose 1,5-bisphosphate + CO2 + H2O. The catalysed reaction is D-ribulose 1,5-bisphosphate + O2 = 2-phosphoglycolate + (2R)-3-phosphoglycerate + 2 H(+). In terms of biological role, ruBisCO catalyzes two reactions: the carboxylation of D-ribulose 1,5-bisphosphate, the primary event in carbon dioxide fixation, as well as the oxidative fragmentation of the pentose substrate in the photorespiration process. Both reactions occur simultaneously and in competition at the same active site. The sequence is that of Ribulose bisphosphate carboxylase large chain from Cephalotus follicularis (Albany pitcher plant).